A 579-amino-acid polypeptide reads, in one-letter code: MENLKQLQERVAVSDGREKADLVIKNGRIVNVFSGEIMEGDIAIKNGYIAGIGDFSEAEQIMDAAGEFIVPGFIDAHVHVESAMVTPAEFARVLLPNGVTTIVTDPHEIANVAGEKGIEFMLEDAKGAPLDMFVMLPSSVPATEGEHNGETLHAKKLHPLYKHEKVIGLAEVMDFPSVAKGSSDILTKIIDAKKEGGRIDGHGAGLTSADLNNYLAVGIRTDHESTNAKEAVDRLRAGMFVMLREGTVGRDLLQTISAVSEKNSHRFCFCTDDKLINDLITEGSINYNIRLAIENNIDPITAIQMATINAANCHNLPYLGAVAAGYQADIVFLKDLQTIEISKVLKNGQVVVENGARNEAAFEKKHSETFISPKIQHHLSKQDLELPLTNDTCYVIGMKQNNLFTEKLMEQVNVENGKFVPSIEKDLLKMAVVERHHNTGCVGVGIVKGFGLKEGAIATTVAHDSHNIVAVGASDEAMEKAINYVTEMGGGIAVVDETGKVLHDLALPVAGLLSNKPYEEVERDLAGLLKAFNQISNAKGFDPFLTLSFLTLPVIPELKLTDQGLFDFATFQIIPNEVN.

The protein belongs to the metallo-dependent hydrolases superfamily. Adenine deaminase family. Mn(2+) is required as a cofactor.

It catalyses the reaction adenine + H2O + H(+) = hypoxanthine + NH4(+). This is Adenine deaminase from Listeria welshimeri serovar 6b (strain ATCC 35897 / DSM 20650 / CCUG 15529 / CIP 8149 / NCTC 11857 / SLCC 5334 / V8).